A 247-amino-acid chain; its full sequence is ATP synthase subunit a, plastid (247 aa).

A run of 5 helical transmembrane segments spans residues 33-53 (FLVHGQVLITSWVVIAILLGS), 95-115 (VPFIGTMFLFIFVSNWSGALL), 134-154 (INTTVALALLTSAAYFYAGIL), 199-219 (LVVVVLVSLVPSVVPIPVMLL), and 220-240 (GLFTSGIQALIFATLAAAYIG).

Belongs to the ATPase A chain family. In terms of assembly, F-type ATPases have 2 components, CF(1) - the catalytic core - and CF(0) - the membrane proton channel. CF(1) has five subunits: alpha(3), beta(3), gamma(1), delta(1), epsilon(1). CF(0) has four main subunits: a, b, b' and c.

It is found in the plastid membrane. Its function is as follows. Key component of the proton channel; it plays a direct role in the translocation of protons across the membrane. This is ATP synthase subunit a, plastid from Cuscuta exaltata (Tall dodder).